We begin with the raw amino-acid sequence, 441 residues long: Ribulose bisphosphate carboxylase large chain (441 aa).

The substrate site is built by asparagine 89 and threonine 139. Lysine 141 serves as the catalytic Proton acceptor. Lysine 143 contacts substrate. Mg(2+)-binding residues include lysine 167, aspartate 169, and glutamate 170. At lysine 167 the chain carries N6-carboxylysine. The active-site Proton acceptor is histidine 260. Positions 261, 293, and 345 each coordinate substrate.

Belongs to the RuBisCO large chain family. Type I subfamily. In terms of assembly, heterohexadecamer of 8 large chains and 8 small chains; disulfide-linked. The disulfide link is formed within the large subunit homodimers. It depends on Mg(2+) as a cofactor. The disulfide bond which can form in the large chain dimeric partners within the hexadecamer appears to be associated with oxidative stress and protein turnover.

It localises to the plastid. Its subcellular location is the chloroplast. The catalysed reaction is 2 (2R)-3-phosphoglycerate + 2 H(+) = D-ribulose 1,5-bisphosphate + CO2 + H2O. It catalyses the reaction D-ribulose 1,5-bisphosphate + O2 = 2-phosphoglycolate + (2R)-3-phosphoglycerate + 2 H(+). Its function is as follows. RuBisCO catalyzes two reactions: the carboxylation of D-ribulose 1,5-bisphosphate, the primary event in carbon dioxide fixation, as well as the oxidative fragmentation of the pentose substrate in the photorespiration process. Both reactions occur simultaneously and in competition at the same active site. This chain is Ribulose bisphosphate carboxylase large chain, found in Coriandrum sativum (Coriander).